Consider the following 443-residue polypeptide: C4-dicarboxylate transport protein (443 aa).

10 helical membrane passes run 10 to 30 (SLYF…HFYP), 46 to 66 (LIKM…IAGM), 78 to 98 (YALL…LIVV), 130 to 150 (SIVG…FANG), 152 to 172 (ILQV…LGAY), 199 to 219 (PLGA…GSLV), 224 to 244 (LMIC…GAIC), 291 to 311 (VVGL…SIYL), 332 to 352 (ITLL…TGSG), and 354 to 374 (IVLA…LALI). Positions 415–443 (ELASGGRPITDTRETDDLGVAEGPAPSIK) are disordered.

It belongs to the dicarboxylate/amino acid:cation symporter (DAACS) (TC 2.A.23) family.

It is found in the cell inner membrane. Its function is as follows. Responsible for the transport of dicarboxylates such as succinate, fumarate, and malate from the periplasm across the membrane. This Pseudomonas fluorescens (strain ATCC BAA-477 / NRRL B-23932 / Pf-5) protein is C4-dicarboxylate transport protein.